A 429-amino-acid chain; its full sequence is Gamma-glutamyl phosphate reductase (429 aa).

This sequence belongs to the gamma-glutamyl phosphate reductase family.

Its subcellular location is the cytoplasm. The enzyme catalyses L-glutamate 5-semialdehyde + phosphate + NADP(+) = L-glutamyl 5-phosphate + NADPH + H(+). It functions in the pathway amino-acid biosynthesis; L-proline biosynthesis; L-glutamate 5-semialdehyde from L-glutamate: step 2/2. Catalyzes the NADPH-dependent reduction of L-glutamate 5-phosphate into L-glutamate 5-semialdehyde and phosphate. The product spontaneously undergoes cyclization to form 1-pyrroline-5-carboxylate. This chain is Gamma-glutamyl phosphate reductase, found in Sphingopyxis alaskensis (strain DSM 13593 / LMG 18877 / RB2256) (Sphingomonas alaskensis).